Consider the following 495-residue polypeptide: UDP-N-acetylmuramoyl-L-alanyl-D-glutamate--2,6-diaminopimelate ligase (495 aa).

S29 serves as a coordination point for UDP-N-acetyl-alpha-D-muramoyl-L-alanyl-D-glutamate. 111-117 lines the ATP pocket; that stretch reads GTNGKTS. UDP-N-acetyl-alpha-D-muramoyl-L-alanyl-D-glutamate is bound by residues 153 to 154, S180, Q186, and R188; that span reads TT. K220 is modified (N6-carboxylysine). Residues R384, 408–411, G459, and E463 each bind meso-2,6-diaminopimelate; that span reads DNPR. The Meso-diaminopimelate recognition motif signature appears at 408-411; that stretch reads DNPR.

It belongs to the MurCDEF family. MurE subfamily. The cofactor is Mg(2+). Carboxylation is probably crucial for Mg(2+) binding and, consequently, for the gamma-phosphate positioning of ATP.

The protein resides in the cytoplasm. It catalyses the reaction UDP-N-acetyl-alpha-D-muramoyl-L-alanyl-D-glutamate + meso-2,6-diaminopimelate + ATP = UDP-N-acetyl-alpha-D-muramoyl-L-alanyl-gamma-D-glutamyl-meso-2,6-diaminopimelate + ADP + phosphate + H(+). It participates in cell wall biogenesis; peptidoglycan biosynthesis. Catalyzes the addition of meso-diaminopimelic acid to the nucleotide precursor UDP-N-acetylmuramoyl-L-alanyl-D-glutamate (UMAG) in the biosynthesis of bacterial cell-wall peptidoglycan. In Xylella fastidiosa (strain 9a5c), this protein is UDP-N-acetylmuramoyl-L-alanyl-D-glutamate--2,6-diaminopimelate ligase.